A 186-amino-acid chain; its full sequence is ATP synthase subunit delta (186 aa).

The protein belongs to the ATPase delta chain family. F-type ATPases have 2 components, F(1) - the catalytic core - and F(0) - the membrane proton channel. F(1) has five subunits: alpha(3), beta(3), gamma(1), delta(1), epsilon(1). F(0) has three main subunits: a(1), b(2) and c(10-14). The alpha and beta chains form an alternating ring which encloses part of the gamma chain. F(1) is attached to F(0) by a central stalk formed by the gamma and epsilon chains, while a peripheral stalk is formed by the delta and b chains.

The protein resides in the cell inner membrane. In terms of biological role, f(1)F(0) ATP synthase produces ATP from ADP in the presence of a proton or sodium gradient. F-type ATPases consist of two structural domains, F(1) containing the extramembraneous catalytic core and F(0) containing the membrane proton channel, linked together by a central stalk and a peripheral stalk. During catalysis, ATP synthesis in the catalytic domain of F(1) is coupled via a rotary mechanism of the central stalk subunits to proton translocation. This protein is part of the stalk that links CF(0) to CF(1). It either transmits conformational changes from CF(0) to CF(1) or is implicated in proton conduction. This Brucella melitensis biotype 2 (strain ATCC 23457) protein is ATP synthase subunit delta.